The primary structure comprises 286 residues: Type II restriction enzyme NgoMIV (286 aa).

Mg(2+)-binding residues include Asp-140 and Cys-186.

As to quaternary structure, homotetramer. Mg(2+) serves as cofactor.

It carries out the reaction Endonucleolytic cleavage of DNA to give specific double-stranded fragments with terminal 5'-phosphates.. A P subtype restriction enzyme that recognizes the double-stranded sequence 5'-GCCGGC-3' and cleaves after G-1. The protein is Type II restriction enzyme NgoMIV (ngoMIVR) of Neisseria gonorrhoeae.